A 147-amino-acid polypeptide reads, in one-letter code: Hemoglobin subunit rho (147 aa).

Residues 3 to 147 (HWSAEEKQLI…VAHALAYKYH (145 aa)) form the Globin domain. Residues histidine 64 and histidine 93 each coordinate heme b.

It belongs to the globin family.

Functionally, the rho chain is the major early embryonic beta-type hemoglobin chain. This chain is Hemoglobin subunit rho, found in Gallus gallus (Chicken).